The primary structure comprises 547 residues: CTP synthase (547 aa).

The interval 1-269 (MKTKFIFVTG…DQKVAIMLRL (269 aa)) is amidoligase domain. Position 14 (Ser-14) interacts with CTP. A UTP-binding site is contributed by Ser-14. ATP contacts are provided by residues 15–20 (SLGKGL) and Asp-72. 2 residues coordinate Mg(2+): Asp-72 and Glu-143. CTP-binding positions include 150–152 (DIE), 190–195 (KTKPTQ), and Lys-226. UTP-binding positions include 190–195 (KTKPTQ) and Lys-226. In terms of domain architecture, Glutamine amidotransferase type-1 spans 294–547 (TVAIVGKYVD…IGAAKKHAKV (254 aa)). Position 356 (Gly-356) interacts with L-glutamine. Cys-383 functions as the Nucleophile; for glutamine hydrolysis in the catalytic mechanism. Residues 384–387 (LGMQ), Glu-407, and Arg-475 contribute to the L-glutamine site. Catalysis depends on residues His-520 and Glu-522.

The protein belongs to the CTP synthase family. Homotetramer.

The enzyme catalyses UTP + L-glutamine + ATP + H2O = CTP + L-glutamate + ADP + phosphate + 2 H(+). It catalyses the reaction L-glutamine + H2O = L-glutamate + NH4(+). The catalysed reaction is UTP + NH4(+) + ATP = CTP + ADP + phosphate + 2 H(+). Its pathway is pyrimidine metabolism; CTP biosynthesis via de novo pathway; CTP from UDP: step 2/2. Allosterically activated by GTP, when glutamine is the substrate; GTP has no effect on the reaction when ammonia is the substrate. The allosteric effector GTP functions by stabilizing the protein conformation that binds the tetrahedral intermediate(s) formed during glutamine hydrolysis. Inhibited by the product CTP, via allosteric rather than competitive inhibition. Functionally, catalyzes the ATP-dependent amination of UTP to CTP with either L-glutamine or ammonia as the source of nitrogen. Regulates intracellular CTP levels through interactions with the four ribonucleotide triphosphates. The polypeptide is CTP synthase (Desulfovibrio desulfuricans (strain ATCC 27774 / DSM 6949 / MB)).